Reading from the N-terminus, the 131-residue chain is Fumarate reductase subunit C (131 aa).

3 helical membrane-spanning segments follow: residues 30-50, 57-77, and 109-129; these read EGTA…LFAL, WMGF…LITL, and IIKG…YVAL.

The protein belongs to the FrdC family. As to quaternary structure, part of an enzyme complex containing four subunits: a flavoprotein (FrdA), an iron-sulfur protein (FrdB), and two hydrophobic anchor proteins (FrdC and FrdD).

The protein localises to the cell inner membrane. Two distinct, membrane-bound, FAD-containing enzymes are responsible for the catalysis of fumarate and succinate interconversion; fumarate reductase is used in anaerobic growth, and succinate dehydrogenase is used in aerobic growth. Anchors the catalytic components of the fumarate reductase complex to the cell inner membrane, binds quinones. This chain is Fumarate reductase subunit C, found in Salmonella heidelberg (strain SL476).